Reading from the N-terminus, the 1014-residue chain is Regulator of telomere elongation helicase 1 homolog (1014 aa).

The Helicase ATP-binding domain maps to 7–324 (AGIPVHFPFE…KEMLLELEKA (318 aa)). ATP is bound at residue 42–49 (SPTGTGKT). Residues cysteine 147, cysteine 165, cysteine 174, and cysteine 210 each coordinate [4Fe-4S] cluster. Residues 253-256 (DEAH) carry the DEAH box motif. Phosphothreonine is present on threonine 873. Residues 891–917 (TDMVKTEPGTSNSCSYGNTSSSGSDSR) are disordered. Residues 899-917 (GTSNSCSYGNTSSSGSDSR) are compositionally biased toward low complexity.

The protein belongs to the helicase family. RAD3/XPD subfamily.

It localises to the nucleus. The catalysed reaction is ATP + H2O = ADP + phosphate + H(+). A probable ATP-dependent DNA helicase implicated in DNA repair and the maintenance of genomic stability. Acts as an anti-recombinase to counteract toxic recombination and limit crossover during meiosis. Regulates meiotic recombination and crossover homeostasis by physically dissociating strand invasion events and thereby promotes noncrossover repair by meiotic synthesis dependent strand annealing (SDSA) as well as disassembly of D loop recombination intermediates. The protein is Regulator of telomere elongation helicase 1 homolog of Drosophila mojavensis (Fruit fly).